A 315-amino-acid polypeptide reads, in one-letter code: NADH-ubiquinone oxidoreductase chain 1 (315 aa).

8 helical membrane-spanning segments follow: residues 6-26 (FILS…SVAF), 80-100 (ISPI…PFFV), 107-127 (LGGL…MIAG), 153-173 (LALI…MYFF), 177-197 (IYIW…TISL), 229-249 (LIFM…CVIF), 253-273 (DVFN…FIWA), and 292-312 (CFLS…ILLF).

The protein belongs to the complex I subunit 1 family.

The protein localises to the mitochondrion inner membrane. The enzyme catalyses a ubiquinone + NADH + 5 H(+)(in) = a ubiquinol + NAD(+) + 4 H(+)(out). Its function is as follows. Core subunit of the mitochondrial membrane respiratory chain NADH dehydrogenase (Complex I) that is believed to belong to the minimal assembly required for catalysis. Complex I functions in the transfer of electrons from NADH to the respiratory chain. The immediate electron acceptor for the enzyme is believed to be ubiquinone. The polypeptide is NADH-ubiquinone oxidoreductase chain 1 (mt:ND1) (Drosophila persimilis (Fruit fly)).